The primary structure comprises 60 residues: Ferredoxin-1 (60 aa).

4Fe-4S ferredoxin-type domains follow at residues 2-27 (LYITEECTYCGACEPECPVTAISAGD) and 28-60 (DIYVIDANTCNECAGLDEQACVAVCPAECIVQG). Residues Cys8, Cys11, Cys14, Cys18, Cys37, Cys40, Cys48, and Cys52 each coordinate [4Fe-4S] cluster.

[4Fe-4S] cluster is required as a cofactor.

Functionally, ferredoxins are iron-sulfur proteins that transfer electrons in a wide variety of metabolic reactions. The polypeptide is Ferredoxin-1 (Chlorobium limicola).